We begin with the raw amino-acid sequence, 82 residues long: MVTIRLARGGAKKRPFYQVVVTDSRNARDGRFIERVGFFNPIASGQAEALRLDLDRIEHWVGLGATVSDRVHALIKDAKKAA.

The protein belongs to the bacterial ribosomal protein bS16 family.

This chain is Small ribosomal subunit protein bS16, found in Serratia proteamaculans (strain 568).